The sequence spans 342 residues: Methionyl-tRNA formyltransferase (342 aa).

108–111 serves as a coordination point for (6S)-5,6,7,8-tetrahydrofolate; sequence SLLP.

The protein belongs to the Fmt family.

It carries out the reaction L-methionyl-tRNA(fMet) + (6R)-10-formyltetrahydrofolate = N-formyl-L-methionyl-tRNA(fMet) + (6S)-5,6,7,8-tetrahydrofolate + H(+). Functionally, attaches a formyl group to the free amino group of methionyl-tRNA(fMet). The formyl group appears to play a dual role in the initiator identity of N-formylmethionyl-tRNA by promoting its recognition by IF2 and preventing the misappropriation of this tRNA by the elongation apparatus. The sequence is that of Methionyl-tRNA formyltransferase from Prochlorococcus marinus (strain MIT 9303).